The sequence spans 541 residues: Glycogen synthase (541 aa).

Lys-17 contributes to the ADP-alpha-D-glucose binding site. The segment at 497–541 is disordered; sequence LARPASPPDTAPVGKPARRRRTTALSTTARAHPVARAAGREKIRA.

It belongs to the glycosyltransferase 1 family. Bacterial/plant glycogen synthase subfamily.

The catalysed reaction is [(1-&gt;4)-alpha-D-glucosyl](n) + ADP-alpha-D-glucose = [(1-&gt;4)-alpha-D-glucosyl](n+1) + ADP + H(+). It participates in glycan biosynthesis; glycogen biosynthesis. In terms of biological role, synthesizes alpha-1,4-glucan chains using ADP-glucose. This Ralstonia nicotianae (strain ATCC BAA-1114 / GMI1000) (Ralstonia solanacearum) protein is Glycogen synthase.